The sequence spans 308 residues: Glycine--tRNA ligase alpha subunit (308 aa).

Belongs to the class-II aminoacyl-tRNA synthetase family. In terms of assembly, tetramer of two alpha and two beta subunits.

The protein localises to the cytoplasm. It carries out the reaction tRNA(Gly) + glycine + ATP = glycyl-tRNA(Gly) + AMP + diphosphate. This chain is Glycine--tRNA ligase alpha subunit, found in Brucella canis (strain ATCC 23365 / NCTC 10854 / RM-666).